The primary structure comprises 792 residues: Probable CoA-transferase Rv1866 (792 aa).

The active-site Nucleophile is the Asp558.

This sequence belongs to the CoA-transferase III family.

Its function is as follows. Probable CoA-transferase. This is Probable CoA-transferase Rv1866 from Mycobacterium tuberculosis (strain ATCC 25618 / H37Rv).